The following is a 144-amino-acid chain: Ribonuclease VapC37 (144 aa).

The region spanning 3–137 (IVDANVLLYA…DFGRFEGVRW (135 aa)) is the PINc domain. Aspartate 5 and aspartate 90 together coordinate Mg(2+).

This sequence belongs to the PINc/VapC protein family. Requires Mg(2+) as cofactor.

It is found in the secreted. Probable toxic component of a type II toxin-antitoxin (TA) system. An RNase. Upon expression in M.smegmatis inhibits colony formation. The putative cognate antitoxin is VapB37. The protein is Ribonuclease VapC37 of Mycobacterium tuberculosis (strain ATCC 25618 / H37Rv).